The sequence spans 451 residues: Phosphoglucosamine mutase (451 aa).

Ser103 serves as the catalytic Phosphoserine intermediate. 4 residues coordinate Mg(2+): Ser103, Asp243, Asp245, and Asp247. Ser103 bears the Phosphoserine mark.

Belongs to the phosphohexose mutase family. It depends on Mg(2+) as a cofactor. Activated by phosphorylation.

It catalyses the reaction alpha-D-glucosamine 1-phosphate = D-glucosamine 6-phosphate. Its function is as follows. Catalyzes the conversion of glucosamine-6-phosphate to glucosamine-1-phosphate. This Lactobacillus gasseri (strain ATCC 33323 / DSM 20243 / BCRC 14619 / CIP 102991 / JCM 1131 / KCTC 3163 / NCIMB 11718 / NCTC 13722 / AM63) protein is Phosphoglucosamine mutase.